We begin with the raw amino-acid sequence, 486 residues long: uncharacterized protein (486 aa).

The protein belongs to the UbiD family.

This is an uncharacterized protein from Aquifex aeolicus (strain VF5).